We begin with the raw amino-acid sequence, 163 residues long: 3-isopropylmalate dehydratase small subunit (163 aa).

The protein belongs to the LeuD family. LeuD type 2 subfamily. In terms of assembly, heterodimer of LeuC and LeuD.

The enzyme catalyses (2R,3S)-3-isopropylmalate = (2S)-2-isopropylmalate. It functions in the pathway amino-acid biosynthesis; L-leucine biosynthesis; L-leucine from 3-methyl-2-oxobutanoate: step 2/4. Its function is as follows. Catalyzes the isomerization between 2-isopropylmalate and 3-isopropylmalate, via the formation of 2-isopropylmaleate. This is 3-isopropylmalate dehydratase small subunit from Ruminiclostridium cellulolyticum (strain ATCC 35319 / DSM 5812 / JCM 6584 / H10) (Clostridium cellulolyticum).